The chain runs to 415 residues: Magnesium-chelatase subunit ChlI, chloroplastic (415 aa).

The transit peptide at 1–67 (MASAFSPATA…APSATQQEAK (67 aa)) directs the protein to the chloroplast. 2 cysteine pairs are disulfide-bonded: C93/C184 and C345/C387.

This sequence belongs to the Mg-chelatase subunits D/I family. The magnesium chelatase complex is a heterotrimer consisting of subunits CHLI, CHLD and CHLH.

The protein resides in the plastid. The protein localises to the chloroplast. It carries out the reaction protoporphyrin IX + Mg(2+) + ATP + H2O = Mg-protoporphyrin IX + ADP + phosphate + 3 H(+). It functions in the pathway porphyrin-containing compound metabolism; chlorophyll biosynthesis. Its activity is regulated as follows. Redox regulation; active in reducing conditions, inactive in oxidizing conditions. Thioredoxins f and m mediate the reversible reductive activation of oxidized CHLI. In terms of biological role, involved in chlorophyll biosynthesis. Catalyzes the insertion of magnesium ion into protoporphyrin IX to yield Mg-protoporphyrin IX. The reaction takes place in two steps, with an ATP-dependent activation followed by an ATP-dependent chelation step. The polypeptide is Magnesium-chelatase subunit ChlI, chloroplastic (CHLI) (Oryza sativa subsp. japonica (Rice)).